A 906-amino-acid chain; its full sequence is Protein translocase subunit SecA (906 aa).

Residues Gln86, 104-108 (GEGKT), and Asp499 each bind ATP. Residues 862–886 (KPVVSRIDPKDRNPDDPTSWGRVSR) are disordered. Residues Cys890, Cys892, Cys901, and His902 each contribute to the Zn(2+) site.

Belongs to the SecA family. Monomer and homodimer. Part of the essential Sec protein translocation apparatus which comprises SecA, SecYEG and auxiliary proteins SecDF-YajC and YidC. The cofactor is Zn(2+).

Its subcellular location is the cell inner membrane. It is found in the cytoplasm. It carries out the reaction ATP + H2O + cellular proteinSide 1 = ADP + phosphate + cellular proteinSide 2.. Part of the Sec protein translocase complex. Interacts with the SecYEG preprotein conducting channel. Has a central role in coupling the hydrolysis of ATP to the transfer of proteins into and across the cell membrane, serving both as a receptor for the preprotein-SecB complex and as an ATP-driven molecular motor driving the stepwise translocation of polypeptide chains across the membrane. In Rickettsia africae (strain ESF-5), this protein is Protein translocase subunit SecA.